The primary structure comprises 486 residues: Nuclear distribution protein PAC1 (486 aa).

Residues 66–99 (STVLRLQKKIIDLENEISNLNNIINSTNSDNNGI) adopt a coiled-coil conformation. WD repeat units lie at residues 119 to 158 (QCEN…NTIP), 164 to 205 (AHTR…RTLN), 206 to 246 (GHEH…SLKS), 249 to 291 (GHSE…GVAM), 294 to 328 (GHSH…FPTI), 329 to 368 (PLEL…IAPH), 389 to 428 (GHSS…ETGY), and 437 to 483 (GHDG…NSIK).

Belongs to the WD repeat LIS1/nudF family. As to quaternary structure, self-associates. Interacts with NDL1 and dynein.

The protein localises to the cytoplasm. It localises to the cytoskeleton. It is found in the spindle pole. In terms of biological role, positively regulates the activity of the minus-end directed microtubule motor protein dynein. Plays a central role in positioning the mitotic spindle at the bud neck during cell division. Targets cytoplasmic dynein to microtubule plus ends, thereby promoting dynein-mediated microtubule sliding along the bud cortex and consequently the movement of the mitotic spindle to the bud neck. The protein is Nuclear distribution protein PAC1 of Candida albicans (strain SC5314 / ATCC MYA-2876) (Yeast).